A 473-amino-acid chain; its full sequence is MFS transporter prlG (473 aa).

A compositionally biased stretch (basic and acidic residues) spans 1 to 12 (MSSTDAEAKNEE). The tract at residues 1–27 (MSSTDAEAKNEEAVDWEGPDDPENPRN) is disordered. The segment covering 13 to 22 (AVDWEGPDDP) has biased composition (acidic residues). 11 consecutive transmembrane segments (helical) span residues 37-57 (VLLV…FAPG), 71-91 (IVAS…PFLL), 101-121 (LIIY…CALS), 125-145 (AMFL…MAIG), 163-183 (ALFG…GGFV), 191-211 (WTFW…LVLM), 266-286 (PIVF…YLLF), 305-325 (GLAY…FAVL), 345-365 (LILM…YGWS), 372-392 (WIVP…ILMP), and 409-429 (ALAA…LAGP).

It belongs to the major facilitator superfamily.

The protein resides in the cell membrane. In terms of biological role, efflux pump that might be required for efficient secretion of pyrrolocin or other secondary metabolies produced by the pyrrolocin gene cluster. In Fungal sp. (strain NRRL 50135), this protein is MFS transporter prlG.